Here is a 137-residue protein sequence, read N- to C-terminus: Holo-[acyl-carrier-protein] synthase (137 aa).

2 residues coordinate Mg(2+): aspartate 8 and glutamate 57.

This sequence belongs to the P-Pant transferase superfamily. AcpS family. Mg(2+) is required as a cofactor.

It localises to the cytoplasm. The enzyme catalyses apo-[ACP] + CoA = holo-[ACP] + adenosine 3',5'-bisphosphate + H(+). Functionally, transfers the 4'-phosphopantetheine moiety from coenzyme A to a Ser of acyl-carrier-protein. This is Holo-[acyl-carrier-protein] synthase from Cereibacter sphaeroides (strain ATCC 17025 / ATH 2.4.3) (Rhodobacter sphaeroides).